A 126-amino-acid polypeptide reads, in one-letter code: uncharacterized protein (126 aa).

Transmembrane regions (helical) follow at residues 4 to 24, 42 to 62, and 64 to 84; these read LIIA…VNIL, AITI…IINP, and ISAS…SYTV.

The protein localises to the membrane. This is an uncharacterized protein from Saccharomyces cerevisiae (strain ATCC 204508 / S288c) (Baker's yeast).